The chain runs to 246 residues: Carbonic anhydrase (246 aa).

Positions 1 to 22 (MKTSLGKAALLALSMMPVTVFA) are cleaved as a signal peptide. The Alpha-carbonic anhydrase domain maps to 23-246 (SHWSYEGEGS…QPLNGRVVIE (224 aa)). A disulfide bond links Cys46 and Cys201. His84 serves as the catalytic Proton acceptor. Zn(2+) contacts are provided by His111, His113, and His130. Residue 197 to 198 (TT) participates in substrate binding.

The protein belongs to the alpha-carbonic anhydrase family. Requires Zn(2+) as cofactor.

It localises to the periplasm. It carries out the reaction hydrogencarbonate + H(+) = CO2 + H2O. Functionally, reversible hydration of carbon dioxide. The polypeptide is Carbonic anhydrase (cah) (Klebsiella pneumoniae).